The sequence spans 405 residues: MDHLPMPKFGPLAGLRVVFSGIEIAGPFAGQMFAEWGAEVIWIENVAWADTIRVQPNYPQLSRRNLHALSLNIFKDEGREAFLKLMETTDIFIEASKGPAFARRGITDEVLWQHNPKLVIAHLSGFGQYGTEEYTNLPAYNTIAQAFSGYLIQNGDVDQPMPAFPYTADYFSGLTATTAALAALHKARETGKGESIDIAMYEVMLRMGQYFMMDYFNGGEMCPRMSKGKDPYYAGCGLYKCADGYIVMELVGITQIEECFKDIGLAHLLSTPEIPEGTQLIHRIECPYGPLVEEKLDAWLAAHTIAEVKERFAELNIACAKVLTVPELESNPQYVARESITQWQTMDGRTCKGPNIMPKFKNNPGQIWRGMPSHGMDTAAILKNIGYSENDIQELVSKGLAKVED.

K97 and R104 together coordinate CoA. The active-site Nucleophile is the D169.

Belongs to the CoA-transferase III family. CaiB subfamily. Homodimer.

The protein resides in the cytoplasm. The catalysed reaction is crotonobetainyl-CoA + (R)-carnitine = crotonobetaine + (R)-carnitinyl-CoA. The enzyme catalyses 4-(trimethylamino)butanoyl-CoA + (R)-carnitine = (R)-carnitinyl-CoA + 4-(trimethylamino)butanoate. It participates in amine and polyamine metabolism; carnitine metabolism. In terms of biological role, catalyzes the reversible transfer of the CoA moiety from gamma-butyrobetainyl-CoA to L-carnitine to generate L-carnitinyl-CoA and gamma-butyrobetaine. Is also able to catalyze the reversible transfer of the CoA moiety from gamma-butyrobetainyl-CoA or L-carnitinyl-CoA to crotonobetaine to generate crotonobetainyl-CoA. The sequence is that of L-carnitine CoA-transferase from Escherichia coli O139:H28 (strain E24377A / ETEC).